We begin with the raw amino-acid sequence, 337 residues long: tRNA N6-adenosine threonylcarbamoyltransferase (337 aa).

Residues His111 and His115 each contribute to the Fe cation site. Residues 134-138, Asp167, Gly180, and Asn272 contribute to the substrate site; that span reads LVSGG. Position 300 (Asp300) interacts with Fe cation.

It belongs to the KAE1 / TsaD family. It depends on Fe(2+) as a cofactor.

The protein resides in the cytoplasm. It catalyses the reaction L-threonylcarbamoyladenylate + adenosine(37) in tRNA = N(6)-L-threonylcarbamoyladenosine(37) in tRNA + AMP + H(+). Functionally, required for the formation of a threonylcarbamoyl group on adenosine at position 37 (t(6)A37) in tRNAs that read codons beginning with adenine. Is involved in the transfer of the threonylcarbamoyl moiety of threonylcarbamoyl-AMP (TC-AMP) to the N6 group of A37, together with TsaE and TsaB. TsaD likely plays a direct catalytic role in this reaction. The protein is tRNA N6-adenosine threonylcarbamoyltransferase of Salmonella choleraesuis (strain SC-B67).